Consider the following 797-residue polypeptide: Protein tamozhennic (797 aa).

Residues 79-146 form the PUB domain; that stretch reads QNAIVAFETI…AAEDTFVLEG (68 aa). Disordered stretches follow at residues 515 to 570 and 638 to 697; these read AGGI…ISDL and LSIT…SAGV. Positions 662 to 679 are enriched in basic and acidic residues; the sequence is EKARTLDKKSGTGRREAK. The RanBP2-type zinc-finger motif lies at 735–766; that stretch reads IVTSPNEWSCSFCTFLNPDTKRICEMCCRSKD.

In terms of assembly, homomultimer. Binds to dl and msl-1 via their nuclear localization signal (NLS). Also binds to Ran, Ran-like and mbo.

The protein localises to the cytoplasm. Has an essential role during oogenesis and embryogenesis, perhaps in modulating the levels of nuclear import of additional proteins. Modulates the nuclear import of dorsal (dl), Dif and male specific lethal 1 (msl-1). Negatively regulates nuclear import of dl and controls the accumulation of dl in the nucleus after immune challenge. This is Protein tamozhennic (tamo) from Drosophila melanogaster (Fruit fly).